Reading from the N-terminus, the 865-residue chain is MKKAKKEKKEKIIKPDGPINFNRSIMAAFEKQSRGKICPLCETKFSLASYKSHMNTCNVADDDEEIEVIATYTRDEAILMRAGPEIILGDASFSDKSENPTKRRKTDEREVPSEDDIVPEVPGPSGIVKNHEMPSESLDVTEISENIEKVIKKSPEWINHRRRSSRLLQNSQKDQADNANKEDPVKKETATISEVLQAIERFEQRVSGPEQTWPYYIKITIKIMKRVISTEKFDGTFYADDFWLPSDIITFYRFVELLSEGAKCLLVRLFIRKPAWYNLEKLEQKYPEIPNIKEAVSELAKGHFIDDDSSMKTLDEALQISDVVALKNVTKKFKLDGTKNRQELIQSLRKFAQSQQSIFGGTGNVEKSILKSLKQELGPCVRVRGGFVDLFKCLFTIYCPVTTNSANVIDNPSTTNVYQDLLYLMLSVANGTVQFPAPNPCPIIASFYKNRNMLQDYMISKSLEIAIVSQMSNGNLDAALDLAIDAKEFIEQMSDDDKRYYESLEIHERKFTSIWVFTRCCGHASSILERQKKYGMAVEWQKDLLITNKDIQSYCIDSRGIWWDRMLLNLDSHLKEKKECAKMIQIALQDPSILEKELLMIQDRALKLKEMPADFVTPINIGNPEKKTITANVITKSLGDGRINRFMIRDHETDDDVECSVEEVTRRHYLENEGFSTGVHDEGSTWHTLFGLFFYDVIFATDESVESTWLSELQDCPSDLSNTLYSKRKEKFEDRFVWLEEAEQELIEENIRKIWDLKHNETNRECSWKQFPMGAEDCVSFFQCIPRPALILILRRLAENYRNSRSGFPDLTLWNPETKRVAVVEVKGPGDRLSTKQRLWLAIFADSGIRAEVCHVAAQNSRLLV.

A UBZ4-type zinc finger spans residues 35–62; sequence GKICPLCETKFSLASYKSHMNTCNVADD. Zn(2+) is bound by residues cysteine 38, cysteine 41, histidine 53, and cysteine 57. Disordered regions lie at residues 90-140 and 162-187; these read DASF…SLDV and RRSS…PVKK. Basic and acidic residues-rich tracts occupy residues 93 to 112 and 174 to 187; these read FSDK…REVP and DQAD…PVKK. Residues glutamate 682, aspartate 810, glutamate 825, and valine 826 each contribute to the Mn(2+) site. Residues 744-857 form the VRR-NUC domain; it reads QELIEENIRK…GIRAEVCHVA (114 aa).

The protein belongs to the FAN1 family. Mn(2+) is required as a cofactor. It depends on Mg(2+) as a cofactor.

Its subcellular location is the nucleus. The enzyme catalyses Hydrolytically removes 5'-nucleotides successively from the 3'-hydroxy termini of 3'-hydroxy-terminated oligonucleotides.. Its function is as follows. Nuclease required for the repair of DNA interstrand cross-links (ICL). Acts as a 5'-3' exonuclease that anchors at a cut end of DNA and cleaves DNA successively at every third nucleotide, allowing to excise an ICL from one strand through flanking incisions. This Caenorhabditis elegans protein is Fanconi-associated nuclease 1 homolog (fan-1).